Reading from the N-terminus, the 314-residue chain is BTB/POZ domain-containing protein KCTD17 (314 aa).

The BTB domain maps to 24–94 (KWVRLNVGGT…LRHGKLVLDK (71 aa)). The segment at 190–268 (STPNGLSSES…PAGGSRPHPL (79 aa)) is disordered. Residues 196–239 (SSESSRKTKSTEEQLEEQQQQEEEVEEVEVEQVQVEADAQEKAQ) adopt a coiled-coil conformation. Acidic residues predominate over residues 208–225 (EQLEEQQQQEEEVEEVEV).

Homopentamer; forms a closed pentamer. Interacts with CUL3; interaction is direct and forms a 5:5 heterodecamer. Interacts with TCHP. Interacts with CUL3, as part of the BCR(KCTD17) E3 ubiquitin ligase complex, at least composed of CUL3, KCTD17 and RBX1. As to expression, highly expressed in brain. Highest expression is observed in the putamen and the thalamus.

The protein resides in the cytoplasm. In terms of biological role, substrate-adapter for CUL3-RING ubiquitin ligase complexes which mediates the ubiquitination and subsequent proteasomal degradation of TCHP, a protein involved in ciliogenesis down-regulation. Thereby, positively regulates ciliogenesis, playing a crucial role in the initial steps of axoneme extension. May also play a role in endoplasmic reticulum calcium ion homeostasis. The polypeptide is BTB/POZ domain-containing protein KCTD17 (Homo sapiens (Human)).